Here is a 432-residue protein sequence, read N- to C-terminus: Glutamyl-tRNA reductase (432 aa).

Residues 49–52 (TCNR), S101, 106–108 (ESQ), and Q112 each bind substrate. The Nucleophile role is filled by C50. Residue 181 to 186 (GAGETI) participates in NADP(+) binding. A disordered region spans residues 410-432 (KPGYHHPTLQTTIVKTDETDPAS).

Belongs to the glutamyl-tRNA reductase family. Homodimer.

The enzyme catalyses (S)-4-amino-5-oxopentanoate + tRNA(Glu) + NADP(+) = L-glutamyl-tRNA(Glu) + NADPH + H(+). The protein operates within porphyrin-containing compound metabolism; protoporphyrin-IX biosynthesis; 5-aminolevulinate from L-glutamyl-tRNA(Glu): step 1/2. Catalyzes the NADPH-dependent reduction of glutamyl-tRNA(Glu) to glutamate 1-semialdehyde (GSA). This is Glutamyl-tRNA reductase from Xylella fastidiosa (strain M23).